Consider the following 693-residue polypeptide: Cleavage and polyadenylation specificity factor subunit 3-I (693 aa).

The HXHXDH motif motif lies at 81 to 86 (HFHIDH).

This sequence belongs to the metallo-beta-lactamase superfamily. RNA-metabolizing metallo-beta-lactamase-like family. INTS11 subfamily. Component of the CPSF complex, at least composed of CPSF160, CPSF100, CPSF73-I, CPSF73-II, CPSF30, FY and FIPS5. Interacts with CLPS3, CPSF100, CPSF160 and FY. Highly expressed in carpels. Also detected in seedlings, roots, stems, leaves, flowers and siliques.

It localises to the nucleus. Its function is as follows. Component of the cleavage and polyadenylation specificity factor (CPSF) complex that play a key role in pre-mRNA 3'-end formation, recognizing the AAUAAA signal sequence and interacting with poly(A) polymerase and other factors to bring about cleavage and poly(A) addition. May function as mRNA 3'-end-processing endonuclease and also be involved in the histone 3'-end pre-mRNA processing. The polypeptide is Cleavage and polyadenylation specificity factor subunit 3-I (CPSF73-I) (Arabidopsis thaliana (Mouse-ear cress)).